The chain runs to 714 residues: Protein ESC8 (714 aa).

Disordered stretches follow at residues 598-674 (APTG…ELHN) and 694-714 (RQLQDNSREKRSLRRNARKGL). Polar residues predominate over residues 610 to 624 (TSSQRRTTVHYSSDV). The segment covering 628-650 (VSEESENEVDIDVSDDYDSEYLS) has biased composition (acidic residues). Residues 654–674 (TLTRKGEDRTDKSFGKRELHN) show a composition bias toward basic and acidic residues. The segment covering 704 to 714 (RSLRRNARKGL) has biased composition (basic residues).

As to quaternary structure, interacts with GAL11 and SIR2.

Its subcellular location is the cytoplasm. It is found in the nucleus. Involved in HMR and telomere silencing via the recruitment or stabilizing of the SIR (silent information regulators) complex. The protein is Protein ESC8 (ESC8) of Saccharomyces cerevisiae (strain ATCC 204508 / S288c) (Baker's yeast).